The following is a 188-amino-acid chain: Ribonuclease HII (188 aa).

The RNase H type-2 domain occupies 6–188; it reads KPLCGIDEAG…VKGLDEPTLF (183 aa). Residues Asp-12, Glu-13, and Asp-99 each contribute to the a divalent metal cation site.

It belongs to the RNase HII family. The cofactor is Mn(2+). Mg(2+) serves as cofactor.

It localises to the cytoplasm. The enzyme catalyses Endonucleolytic cleavage to 5'-phosphomonoester.. Functionally, endonuclease that specifically degrades the RNA of RNA-DNA hybrids. The polypeptide is Ribonuclease HII (Sulfurovum sp. (strain NBC37-1)).